We begin with the raw amino-acid sequence, 164 residues long: Small ribosomal subunit protein uS5 (164 aa).

In terms of domain architecture, S5 DRBM spans 10-73; it reads LEERVVAINR…EDAKKNLIEV (64 aa).

This sequence belongs to the universal ribosomal protein uS5 family. Part of the 30S ribosomal subunit. Contacts proteins S4 and S8.

In terms of biological role, with S4 and S12 plays an important role in translational accuracy. Functionally, located at the back of the 30S subunit body where it stabilizes the conformation of the head with respect to the body. This is Small ribosomal subunit protein uS5 from Streptococcus gordonii (strain Challis / ATCC 35105 / BCRC 15272 / CH1 / DL1 / V288).